A 432-amino-acid polypeptide reads, in one-letter code: Trigger factor (432 aa).

Positions 161-246 (DDRVTIDFVG…LKKVENMVLP (86 aa)) constitute a PPIase FKBP-type domain.

This sequence belongs to the FKBP-type PPIase family. Tig subfamily.

It is found in the cytoplasm. It carries out the reaction [protein]-peptidylproline (omega=180) = [protein]-peptidylproline (omega=0). Involved in protein export. Acts as a chaperone by maintaining the newly synthesized protein in an open conformation. Functions as a peptidyl-prolyl cis-trans isomerase. The chain is Trigger factor from Haemophilus influenzae (strain PittGG).